The sequence spans 301 residues: Radial spoke head 1 homolog (301 aa).

The segment covering 1 to 20 (MSDLGSEELEEEGENDLGEY) has biased composition (acidic residues). The interval 1-41 (MSDLGSEELEEEGENDLGEYEGERNEVGERHGHGKARLPNG) is disordered. 6 MORN repeats span residues 20 to 43 (YEGE…NGDT), 44 to 66 (YEGS…NGAR), 67 to 89 (YTGD…DGSR), 90 to 112 (YEGE…NNDT), 113 to 135 (YTGE…ETGS), and 159 to 181 (YQGK…IGCE). A compositionally biased stretch (basic and acidic residues) spans 21-31 (EGERNEVGERH). A disordered region spans residues 225–301 (LSEEQPPPEG…FDEEPSDLQD (77 aa)). Residues 249 to 261 (PSEDIQAEGFEGE) show a composition bias toward acidic residues. A compositionally biased stretch (basic and acidic residues) spans 262 to 278 (LEPRGADEDVDTFRQES). The segment covering 279–290 (QENSYDIDQGNL) has biased composition (polar residues). Residues 292–301 (FDEEPSDLQD) show a composition bias toward acidic residues.

As to quaternary structure, component of the axonemal radial spoke 1 (RS1) and 2 (RS2) complexes, at least composed of spoke head proteins RSPH1, RSPH3, RSPH9 and the cilia-specific component RSPH4A or sperm-specific component RSPH6A, spoke stalk proteins RSPH14, DNAJB13, DYDC1, ROPN1L and NME5, and the RS1 complex-specific anchor protein IQUB. Interacts with RSPH3B. Interacts with RSPH4A. Interacts with RSPH6A. As to expression, expressed in the trachea, ependymal cells, oviduct and ependymal cells (at protein level). Germ cell specific. Specifically expressed in testis, and to a lower extent in ovary. Not expressed in somatic tissues.

It is found in the cytoplasm. The protein localises to the chromosome. It localises to the cytoskeleton. Its subcellular location is the cilium axoneme. The protein resides in the flagellum axoneme. In terms of biological role, functions as part of axonemal radial spoke complexes that play an important part in the motility of sperm and cilia. The chain is Radial spoke head 1 homolog (Rsph1) from Mus musculus (Mouse).